We begin with the raw amino-acid sequence, 573 residues long: Myrcene synthase TPS5FN (573 aa).

(2E)-geranyl diphosphate is bound by residues Arg-286, Asp-323, Asp-327, Arg-464, and Asp-467. Residues Asp-323 and Asp-327 each coordinate Mg(2+). Positions 323 to 327 (DDIFD) match the DDXXD motif motif. The Mg(2+) site is built by Asp-467, Thr-471, and Glu-475.

Belongs to the terpene synthase family. Tpsb subfamily. It depends on Mg(2+) as a cofactor. Mn(2+) serves as cofactor. Expressed in glandular trichomes two to four weeks after flowering onset.

The enzyme catalyses (2E)-geranyl diphosphate = beta-myrcene + diphosphate. The catalysed reaction is (2E)-geranyl diphosphate = (1R,5R)-alpha-pinene + diphosphate. It catalyses the reaction (2E)-geranyl diphosphate = sabinene + diphosphate. It carries out the reaction (2E)-geranyl diphosphate = (4S)-limonene + diphosphate. The enzyme catalyses (2E)-geranyl diphosphate = terpinolene + diphosphate. The catalysed reaction is (2E)-geranyl diphosphate = camphene + diphosphate. The protein operates within secondary metabolite biosynthesis; terpenoid biosynthesis. In terms of biological role, involved in monoterpene (C10) olefins biosynthesis, constituants of cannabinoids and terpenoids-rich resins. Catalyzes mainly the conversion of (2E)-geranyl diphosphate to beta-myrcene, and also produces minor products such as alpha-pinene, camphene, sabinene, limonene and terpinolene. This Cannabis sativa (Hemp) protein is Myrcene synthase TPS5FN.